Consider the following 597-residue polypeptide: Arginine--tRNA ligase (597 aa).

The short motif at 138 to 148 (ANPTGPMHVGH) is the 'HIGH' region element.

This sequence belongs to the class-I aminoacyl-tRNA synthetase family. Monomer.

It localises to the cytoplasm. It catalyses the reaction tRNA(Arg) + L-arginine + ATP = L-arginyl-tRNA(Arg) + AMP + diphosphate. This is Arginine--tRNA ligase from Rhodopseudomonas palustris (strain ATCC BAA-98 / CGA009).